The chain runs to 452 residues: NADH-ubiquinone oxidoreductase chain 4 (452 aa).

14 helical membrane passes run 4–24 (LVLGYVGLVIGVIVTKKSMVW), 29–49 (VGSVLLMLPATVLVNMNMTIS), 59–79 (FVSLGLTVLSIWLLPLMLLAS), 88–110 (LIYQRVFVGCQVFLTGALVLAFM), 114–136 (LLLFYIAFESTLLPTLMLITRWG), 144–164 (AGTYFMFFTLVGSLPLLICLI), 182–202 (VFQLSYLVNFWWVGCILAFLV), 221–241 (PIAGSMVLAGVLLKLGGYGMM), 252–272 (MLSSEVFLALALWGIVVMGGI), 282–304 (LIAYSSVGHMALVVGGVLTGVAW), 309–331 (AMVLMIAHGLVSSCLFCLANLWY), 345–365 (LIMIFPLISLGWFLMSLMNMA), 390–410 (IVYMSLGAVLTAAYSLYLFGM), and 432–452 (LLTTLHLVPAIYLIFYLGLMF).

The protein belongs to the complex I subunit 4 family.

Its subcellular location is the mitochondrion membrane. The catalysed reaction is a ubiquinone + NADH + 5 H(+)(in) = a ubiquinol + NAD(+) + 4 H(+)(out). Core subunit of the mitochondrial membrane respiratory chain NADH dehydrogenase (Complex I) that is believed to belong to the minimal assembly required for catalysis. Complex I functions in the transfer of electrons from NADH to the respiratory chain. The immediate electron acceptor for the enzyme is believed to be ubiquinone. In Branchiostoma lanceolatum (Common lancelet), this protein is NADH-ubiquinone oxidoreductase chain 4 (ND4).